A 757-amino-acid polypeptide reads, in one-letter code: Chloride anion exchanger (757 aa).

The Cytoplasmic segment spans residues 1 to 71 (MIEAIGNQYV…SWLPAYKIKE (71 aa)). Residues 72-92 (WLLSDIVSGISTGLVAVLQGL) traverse the membrane as a helical segment. Ala-93 is a topological domain (extracellular). Residues 94–114 (FALLVNIPPAYGLYAAFFPVI) traverse the membrane as a helical segment. The Cytoplasmic portion of the chain corresponds to 115–124 (TYFFLGTSRH). Residues 125 to 145 (ISVGPFPVLSMMVGVVVTRVA) traverse the membrane as a helical segment. At 146-176 (SGSDTSPALSSSSAENDSMIEEKVMVAASVT) the chain is on the extracellular side. An N-linked (GlcNAc...) asparagine glycan is attached at Asn-161. A helical membrane pass occupies residues 177 to 197 (VLSGIIQLLLGVLQIGFVVIY). At 198-201 (LSES) the chain is on the cytoplasmic side. A helical transmembrane segment spans residues 202-222 (LISGFTTAAAIHVLVSQLKFM). Residues 223–250 (LQLTVPAHSDPFSIFKVLESVFSQIQKT) are Extracellular-facing. A helical transmembrane segment spans residues 251–271 (NIADLVTSVIILVVVFVVKEI). Topologically, residues 272 to 278 (NQRYRSK) are cytoplasmic. Residues 279–299 (LPVPIPIELIMTVIATGISYG) form a helical membrane-spanning segment. Residues 300-335 (CNFEQRFGVAVVGNMSLGFQPPITPSVEVFQDTIGD) are Extracellular-facing. The chain crosses the membrane as a helical span at residues 336-356 (CFGIAIVGFAVAFSVASVYSL). Over 357-367 (KYDYPIDGNQE) the chain is Cytoplasmic. A helical membrane pass occupies residues 368 to 388 (LIALGVSNIFTGAFKGFAGST). At 389-404 (ALSRSGVQESTGGKTQ) the chain is on the extracellular side. The helical transmembrane segment at 405–425 (VAGLLSAVIVLIVIVAIGFLL) threads the bilayer. The Cytoplasmic segment spans residues 426–462 (QPLQKSVLAALALGNLKGMLMQFAEIGRLWKKDKYDC). Residues 463–483 (LIWIMTFIFAIVLGLGLGLAA) form a helical membrane-spanning segment. Over 484–757 (SVAFQLLTIV…ECQVPVETKF (274 aa)) the chain is Extracellular. Residues 518-713 (NYADVYEPEG…LTIHDAILHI (196 aa)) form the STAS domain. The PDZ-binding motif lies at 754–757 (ETKF).

The protein belongs to the SLC26A/SulP transporter (TC 2.A.53) family. In terms of assembly, interacts with PDZK1, CFTR, SLC26A6 and NHERF1. Interacts (via PDZ-binding motif) with NHERF4 (via the third PDZ domain); interaction leads to decreased expression of SLC26A3 on the cell membrane resulting in its reduced exchanger activity. N-glycosylation is required for efficient cell surface expression, and protection from proteolytic degradation.

The protein localises to the apical cell membrane. Its subcellular location is the membrane. It localises to the cell membrane. The catalysed reaction is hydrogencarbonate(in) + 2 chloride(out) = hydrogencarbonate(out) + 2 chloride(in). Functionally, mediates chloride-bicarbonate exchange with a chloride bicarbonate stoichiometry of 2:1 in the intestinal epithelia. Plays a role in the chloride and bicarbonate homeostasis during sperm epididymal maturation and capacitation. This chain is Chloride anion exchanger (Slc26a3), found in Rattus norvegicus (Rat).